The sequence spans 487 residues: RCC1 repeat-containing protein DDB_G0284033 (487 aa).

RCC1 repeat units follow at residues Ser66 to Tyr127, Arg207 to Asn259, Asp260 to Ser313, Asn373 to Thr426, and Asp428 to Ser483.

The polypeptide is RCC1 repeat-containing protein DDB_G0284033 (Dictyostelium discoideum (Social amoeba)).